The primary structure comprises 322 residues: Zinc finger C2HC domain-containing protein CBG14627 (322 aa).

C2HC/C3H-type zinc fingers lie at residues 9–38 (PVYP…LATL) and 119–148 (DYVQ…QTTR). Positions 13, 16, 28, 32, 123, 126, 138, and 142 each coordinate Zn(2+). The interval 144–322 (EQTTRKQGGK…SRNNSRSRIF (179 aa)) is disordered. Positions 148–168 (RKQGGKSSAGNRGLTSNNYRS) are enriched in polar residues. Residues 171 to 219 (SKHEGRKQESSSRNGSAERKTTTRGRDGSLSRARRDDSNDLTNRRKSLE) show a composition bias toward basic and acidic residues. Residues 220 to 238 (TRSQLTTGQANNRTTSLSA) show a composition bias toward polar residues. Positions 278-294 (TTTTASASRSGSGSSSR) are enriched in low complexity. A compositionally biased stretch (basic and acidic residues) spans 296 to 305 (RTRDESRESR). Residues 311–322 (SNSRNNSRSRIF) show a composition bias toward low complexity.

This sequence belongs to the ZC2HC1 family. The cofactor is Zn(2+).

This chain is Zinc finger C2HC domain-containing protein CBG14627, found in Caenorhabditis briggsae.